Consider the following 438-residue polypeptide: CBL-interacting protein kinase 32 (438 aa).

Positions 13–268 (YELGRTIGEG…IPEILEDEWF (256 aa)) constitute a Protein kinase domain. ATP is bound by residues 19 to 27 (IGEGTFAKV) and K42. D136 (proton acceptor) is an active-site residue. Residues 154 to 183 (DFGLSALSQQIKDDGLLHTTCGTPNYVAPE) form an activation loop region. Positions 305–329 (EEPEALNAFELISMSAGLNLGNLFD) constitute an NAF domain. Residues 335–364 (KRETRFTSKCPPKEIVRKIEEAAKPLGFDV) are PPI.

The protein belongs to the protein kinase superfamily. CAMK Ser/Thr protein kinase family. SNF1 subfamily. Mn(2+) serves as cofactor.

It carries out the reaction L-seryl-[protein] + ATP = O-phospho-L-seryl-[protein] + ADP + H(+). It catalyses the reaction L-threonyl-[protein] + ATP = O-phospho-L-threonyl-[protein] + ADP + H(+). CIPK serine-threonine protein kinases interact with CBL proteins. Binding of a CBL protein to the regulatory NAF domain of CIPK protein lead to the activation of the kinase in a calcium-dependent manner. This is CBL-interacting protein kinase 32 (CIPK32) from Oryza sativa subsp. japonica (Rice).